A 137-amino-acid chain; its full sequence is Large ribosomal subunit protein bL21 (137 aa).

Residues 1–26 are disordered; sequence MADTKTATPATDAEEATATPPAAAPS.

The protein belongs to the bacterial ribosomal protein bL21 family. Part of the 50S ribosomal subunit. Contacts protein L20.

Functionally, this protein binds to 23S rRNA in the presence of protein L20. The sequence is that of Large ribosomal subunit protein bL21 from Parasynechococcus marenigrum (strain WH8102).